We begin with the raw amino-acid sequence, 678 residues long: Glycine--tRNA ligase beta subunit (678 aa).

The protein belongs to the class-II aminoacyl-tRNA synthetase family. In terms of assembly, tetramer of two alpha and two beta subunits.

The protein resides in the cytoplasm. It catalyses the reaction tRNA(Gly) + glycine + ATP = glycyl-tRNA(Gly) + AMP + diphosphate. This is Glycine--tRNA ligase beta subunit from Streptococcus suis (strain 98HAH33).